Consider the following 128-residue polypeptide: Large ribosomal subunit protein eL31 (128 aa).

It belongs to the eukaryotic ribosomal protein eL31 family.

The protein is Large ribosomal subunit protein eL31 (RpL31) of Drosophila virilis (Fruit fly).